A 222-amino-acid polypeptide reads, in one-letter code: Peptidyl-prolyl cis-trans isomerase FKBP7 (222 aa).

A signal peptide spans 1-23; the sequence is MPKTMHFLFRFIVFFYLWGLFTA. N45 carries N-linked (GlcNAc...) asparagine glycosylation. One can recognise a PPIase FKBP-type domain in the interval 53–145; sequence GDLLNAHYDG…IFEIELYAVT (93 aa). 2 consecutive EF-hand domains span residues 145–180 and 189–222; these read TKGP…EFEK and YQDA…HDEL. Positions 158, 160, 162, 164, 169, 202, 204, 206, and 213 each coordinate Ca(2+). The interval 200–222 is disordered; the sequence is KNDHDGDGFISPKEYNVYQHDEL. The Retention in the endoplasmic reticulum signature appears at 219-222; the sequence is HDEL.

Post-translationally, glycosylated.

Its subcellular location is the endoplasmic reticulum lumen. The enzyme catalyses [protein]-peptidylproline (omega=180) = [protein]-peptidylproline (omega=0). Its function is as follows. PPIases accelerate the folding of proteins during protein synthesis. The sequence is that of Peptidyl-prolyl cis-trans isomerase FKBP7 (FKBP7) from Homo sapiens (Human).